The sequence spans 421 residues: Aspartokinase (421 aa).

7–10 is an ATP binding site; the sequence is KYGG. Residue 25 to 30 coordinates substrate; it reads RIVETK. Residue Ser41 coordinates ATP. Residues 45–49, Glu74, 125–126, 151–154, and Ser154 contribute to the substrate site; these read DTTDD, LD, and RGGS. ATP is bound by residues 174–175, 180–185, and Lys210; these read TD and FTADPR. 2 ACT domains span residues 267-348 and 349-421; these read VTVV…GKVS and LIGA…GTGR. Residues Asp274, 274 to 279, 292 to 294, Gln298, 360 to 361, 374 to 375, and 381 to 382 contribute to the substrate site; these read DVPGYA, NID, VT, NI, and SE.

Belongs to the aspartokinase family. As to quaternary structure, heterotetramer consisting of 2 isoforms Alpha (catalytic and regulation) and of a homodimer of 2 isoforms Beta (regulation).

The catalysed reaction is L-aspartate + ATP = 4-phospho-L-aspartate + ADP. It participates in amino-acid biosynthesis; L-lysine biosynthesis via DAP pathway; (S)-tetrahydrodipicolinate from L-aspartate: step 1/4. Its pathway is amino-acid biosynthesis; L-methionine biosynthesis via de novo pathway; L-homoserine from L-aspartate: step 1/3. It functions in the pathway amino-acid biosynthesis; L-threonine biosynthesis; L-threonine from L-aspartate: step 1/5. Feedback inhibition by lysine and threonine. Its function is as follows. Catalyzes the phosphorylation of the beta-carboxyl group of aspartic acid with ATP to yield 4-phospho-L-aspartate, which is involved in the branched biosynthetic pathway leading to the biosynthesis of amino acids lysine, threonine, isoleucine and methionine. This is Aspartokinase (ask) from Mycolicibacterium smegmatis (Mycobacterium smegmatis).